The chain runs to 175 residues: uncharacterized protein (175 aa).

2 disordered regions span residues 68–111 (NKSN…DDDQ) and 154–175 (PERAKRESDDEDDMFPIKKLTT). Residues 95-106 (EEQPMMPYQQPP) are compositionally biased toward low complexity.

This sequence belongs to the asfivirus H171R family.

It localises to the virion. This is an uncharacterized protein from African swine fever virus (isolate Pig/Kenya/KEN-50/1950) (ASFV).